The sequence spans 92 residues: Large ribosomal subunit protein bL27 (92 aa).

Positions 1–10 (MLLQLQIQLF) are excised as a propeptide.

Belongs to the bacterial ribosomal protein bL27 family. In terms of processing, the N-terminus is cleaved by ribosomal processing cysteine protease Prp.

The protein is Large ribosomal subunit protein bL27 of Aster yellows witches'-broom phytoplasma (strain AYWB).